We begin with the raw amino-acid sequence, 242 residues long: 4-hydroxy-tetrahydrodipicolinate reductase (242 aa).

NAD(+)-binding positions include 8-13 (GAKGRM), 75-77 (GTT), and 99-102 (ATNM). His-131 acts as the Proton donor/acceptor in catalysis. Position 132 (His-132) interacts with (S)-2,3,4,5-tetrahydrodipicolinate. Residue Lys-135 is the Proton donor of the active site. 141–142 (GT) lines the (S)-2,3,4,5-tetrahydrodipicolinate pocket.

Belongs to the DapB family.

The protein resides in the cytoplasm. It catalyses the reaction (S)-2,3,4,5-tetrahydrodipicolinate + NAD(+) + H2O = (2S,4S)-4-hydroxy-2,3,4,5-tetrahydrodipicolinate + NADH + H(+). It carries out the reaction (S)-2,3,4,5-tetrahydrodipicolinate + NADP(+) + H2O = (2S,4S)-4-hydroxy-2,3,4,5-tetrahydrodipicolinate + NADPH + H(+). It functions in the pathway amino-acid biosynthesis; L-lysine biosynthesis via DAP pathway; (S)-tetrahydrodipicolinate from L-aspartate: step 4/4. Catalyzes the conversion of 4-hydroxy-tetrahydrodipicolinate (HTPA) to tetrahydrodipicolinate. This is 4-hydroxy-tetrahydrodipicolinate reductase from Campylobacter jejuni subsp. jejuni serotype O:6 (strain 81116 / NCTC 11828).